The following is a 162-amino-acid chain: NADH-quinone oxidoreductase subunit I (162 aa).

4Fe-4S ferredoxin-type domains are found at residues 53–83 (LRRY…IESD) and 93–122 (TRYD…ETHI). [4Fe-4S] cluster is bound by residues Cys63, Cys66, Cys69, Cys73, Cys102, Cys105, Cys108, and Cys112.

This sequence belongs to the complex I 23 kDa subunit family. As to quaternary structure, NDH-1 is composed of 14 different subunits. Subunits NuoA, H, J, K, L, M, N constitute the membrane sector of the complex. [4Fe-4S] cluster is required as a cofactor.

The protein resides in the cell inner membrane. The enzyme catalyses a quinone + NADH + 5 H(+)(in) = a quinol + NAD(+) + 4 H(+)(out). In terms of biological role, NDH-1 shuttles electrons from NADH, via FMN and iron-sulfur (Fe-S) centers, to quinones in the respiratory chain. The immediate electron acceptor for the enzyme in this species is believed to be ubiquinone. Couples the redox reaction to proton translocation (for every two electrons transferred, four hydrogen ions are translocated across the cytoplasmic membrane), and thus conserves the redox energy in a proton gradient. In Bordetella avium (strain 197N), this protein is NADH-quinone oxidoreductase subunit I.